A 460-amino-acid polypeptide reads, in one-letter code: Hydroxyproline dehydrogenase (460 aa).

K310 is modified (N6-acetyllysine).

Belongs to the proline oxidase family. Requires FAD as cofactor.

It catalyses the reaction trans-4-hydroxy-L-proline + a quinone = (3R,5S)-1-pyrroline-3-hydroxy-5-carboxylate + a quinol + H(+). It carries out the reaction L-proline + a quinone = (S)-1-pyrroline-5-carboxylate + a quinol + H(+). Its activity is regulated as follows. Hydroproxyproline dehydrogenase activity is inhibited by THFA,(1R,3R)3-OH-cyclopentane-COOH and 5-OH-1H-pyrazole-3-COOH. Dehydrogenase that converts trans-4-L-hydroxyproline to delta-1-pyrroline-3-hydroxy-5-carboxylate (Hyp) using ubiquinone-10 as the terminal electron acceptor. Can also use proline as a substrate but with a very much lower efficiency. Does not react with other diastereomers of Hyp: trans-4-D-hydroxyproline and cis-4-L-hydroxyproline. Ubiquininone analogs such as menadione, duroquinone and ubiquinone-1 react more efficiently than oxygen as the terminal electron acceptor during catalysis. The protein is Hydroxyproline dehydrogenase of Homo sapiens (Human).